Consider the following 216-residue polypeptide: Pyridoxine/pyridoxamine 5'-phosphate oxidase (216 aa).

Residues 12–15 (RREY) and lysine 70 contribute to the substrate site. FMN-binding positions include 65–70 (RVVLLK), 80–81 (YT), arginine 86, lysine 87, and glutamine 109. Substrate-binding residues include tyrosine 127 and arginine 131. Residues 144 to 145 (QS) and tryptophan 189 each bind FMN. Substrate is bound at residue 195–197 (RLH). Arginine 199 contacts FMN.

This sequence belongs to the pyridoxamine 5'-phosphate oxidase family. In terms of assembly, homodimer. Requires FMN as cofactor.

It catalyses the reaction pyridoxamine 5'-phosphate + O2 + H2O = pyridoxal 5'-phosphate + H2O2 + NH4(+). It carries out the reaction pyridoxine 5'-phosphate + O2 = pyridoxal 5'-phosphate + H2O2. Its pathway is cofactor metabolism; pyridoxal 5'-phosphate salvage; pyridoxal 5'-phosphate from pyridoxamine 5'-phosphate: step 1/1. It functions in the pathway cofactor metabolism; pyridoxal 5'-phosphate salvage; pyridoxal 5'-phosphate from pyridoxine 5'-phosphate: step 1/1. Its function is as follows. Catalyzes the oxidation of either pyridoxine 5'-phosphate (PNP) or pyridoxamine 5'-phosphate (PMP) into pyridoxal 5'-phosphate (PLP). In Blochmanniella pennsylvanica (strain BPEN), this protein is Pyridoxine/pyridoxamine 5'-phosphate oxidase.